Consider the following 254-residue polypeptide: Phosphomannomutase (254 aa).

Residue D16 is the Nucleophile of the active site. Mg(2+)-binding residues include D16 and D18. Catalysis depends on D18, which acts as the Proton donor/acceptor. R25, R129, R140, R147, S185, and D187 together coordinate alpha-D-mannose 1-phosphate. D216, Y228, D230, and T233 together coordinate Mg(2+).

This sequence belongs to the eukaryotic PMM family. As to quaternary structure, homodimer.

It localises to the cytoplasm. The catalysed reaction is alpha-D-mannose 1-phosphate = D-mannose 6-phosphate. It participates in nucleotide-sugar biosynthesis; GDP-alpha-D-mannose biosynthesis; alpha-D-mannose 1-phosphate from D-fructose 6-phosphate: step 2/2. Its function is as follows. Involved in the synthesis of the GDP-mannose and dolichol-phosphate-mannose required for a number of critical mannosyl transfer reactions. Required for maintaining N-linked glycoprotein glycosylation at the neuromuscular junction (NMJ) synaptomatrix, and thus acts in multiple pathways that prevent NMJ structural overgrowth, restrict synaptic bouton differentiation, and limit NMJ neurotransmission strength, in order to maintain viability, coordinate movement, and in adults ensure correct wing positioning. Acts in the NMJ trans-synaptic Wg pathway via glycosylation of synaptic Mmp2 which enables dlp/wg signaling during development. This is Phosphomannomutase from Drosophila melanogaster (Fruit fly).